The sequence spans 291 residues: Protease HtpX (291 aa).

Helical transmembrane passes span 4-24 (ILLFLATNLAVLVIASITLKL) and 36-56 (GSLLVFCAVFGFAGSLVSLFI). Zn(2+) is bound at residue histidine 142. Glutamate 143 is a catalytic residue. Histidine 146 provides a ligand contact to Zn(2+). The next 2 helical transmembrane spans lie at 150-170 (GDMVTLALIQGVVNTFVMFFA) and 193-213 (FVATIFAELVLGILASIIVMW). Glutamate 219 is a Zn(2+) binding site.

Belongs to the peptidase M48B family. Zn(2+) is required as a cofactor.

It is found in the cell inner membrane. The chain is Protease HtpX from Pseudomonas aeruginosa (strain LESB58).